The chain runs to 263 residues: Small ribosomal subunit protein eS1 (263 aa).

The span at 235–254 (HGEGGGGKREAGDKSERPEG) shows a compositional bias: basic and acidic residues. The interval 235–263 (HGEGGGGKREAGDKSERPEGYEPPVQESV) is disordered.

Belongs to the eukaryotic ribosomal protein eS1 family. Component of the small ribosomal subunit. Mature ribosomes consist of a small (40S) and a large (60S) subunit. The 40S subunit contains about 33 different proteins and 1 molecule of RNA (18S). The 60S subunit contains about 49 different proteins and 3 molecules of RNA (28S, 5.8S and 5S).

The protein resides in the cytoplasm. The sequence is that of Small ribosomal subunit protein eS1 from Bombyx mandarina (Wild silk moth).